Here is a 765-residue protein sequence, read N- to C-terminus: Phosphoribosylformylglycinamidine synthase subunit PurL (765 aa).

Residues 1–13 are compositionally biased toward polar residues; it reads MTVSPTSAPTQAI. A disordered region spans residues 1 to 32; it reads MTVSPTSAPTQAIDTVERAATTPDEPQPFGEL. The active site involves His65. Positions 68 and 112 each coordinate ATP. Glu114 contributes to the Mg(2+) binding site. Residues 115 to 118 and Arg137 each bind substrate; that span reads SHNH. His116 acts as the Proton acceptor in catalysis. Asp138 contacts Mg(2+). Residue Gln263 participates in substrate binding. Asp291 is a Mg(2+) binding site. Position 335-337 (335-337) interacts with substrate; sequence ESQ. Asn523 and Gly560 together coordinate ATP. Residue Asn561 participates in Mg(2+) binding. Ser563 lines the substrate pocket.

Belongs to the FGAMS family. In terms of assembly, monomer. Part of the FGAM synthase complex composed of 1 PurL, 1 PurQ and 2 PurS subunits.

The protein localises to the cytoplasm. It catalyses the reaction N(2)-formyl-N(1)-(5-phospho-beta-D-ribosyl)glycinamide + L-glutamine + ATP + H2O = 2-formamido-N(1)-(5-O-phospho-beta-D-ribosyl)acetamidine + L-glutamate + ADP + phosphate + H(+). The protein operates within purine metabolism; IMP biosynthesis via de novo pathway; 5-amino-1-(5-phospho-D-ribosyl)imidazole from N(2)-formyl-N(1)-(5-phospho-D-ribosyl)glycinamide: step 1/2. Part of the phosphoribosylformylglycinamidine synthase complex involved in the purines biosynthetic pathway. Catalyzes the ATP-dependent conversion of formylglycinamide ribonucleotide (FGAR) and glutamine to yield formylglycinamidine ribonucleotide (FGAM) and glutamate. The FGAM synthase complex is composed of three subunits. PurQ produces an ammonia molecule by converting glutamine to glutamate. PurL transfers the ammonia molecule to FGAR to form FGAM in an ATP-dependent manner. PurS interacts with PurQ and PurL and is thought to assist in the transfer of the ammonia molecule from PurQ to PurL. The protein is Phosphoribosylformylglycinamidine synthase subunit PurL of Mycobacterium avium (strain 104).